We begin with the raw amino-acid sequence, 159 residues long: NADH-quinone oxidoreductase subunit I (159 aa).

4Fe-4S ferredoxin-type domains lie at 51–80 (RRYE…IEAD) and 90–119 (TRYD…EGPN). [4Fe-4S] cluster contacts are provided by Cys60, Cys63, Cys66, Cys70, Cys99, Cys102, Cys105, and Cys109.

This sequence belongs to the complex I 23 kDa subunit family. NDH-1 is composed of 14 different subunits. Subunits NuoA, H, J, K, L, M, N constitute the membrane sector of the complex. It depends on [4Fe-4S] cluster as a cofactor.

It localises to the cell inner membrane. The catalysed reaction is a quinone + NADH + 5 H(+)(in) = a quinol + NAD(+) + 4 H(+)(out). NDH-1 shuttles electrons from NADH, via FMN and iron-sulfur (Fe-S) centers, to quinones in the respiratory chain. The immediate electron acceptor for the enzyme in this species is believed to be ubiquinone. Couples the redox reaction to proton translocation (for every two electrons transferred, four hydrogen ions are translocated across the cytoplasmic membrane), and thus conserves the redox energy in a proton gradient. This Rickettsia peacockii (strain Rustic) protein is NADH-quinone oxidoreductase subunit I.